Consider the following 558-residue polypeptide: Nucleoprotein (558 aa).

Residues 54–237 are binding site for the cap structure m7GTP; sequence MRKERRDDKD…ITEQQSSINI (184 aa). Residues Asp382 and Glu384 each contribute to the Mn(2+) site. Residues Glu392, Cys499, His502, and Cys518 each coordinate Zn(2+). Asp522 lines the Mn(2+) pocket.

It belongs to the arenaviridae nucleocapsid protein family. In terms of assembly, homomultimerizes to form the nucleocapsid. Binds to viral genomic RNA. Interacts with glycoprotein G2. Interacts with protein Z; this interaction probably directs the encapsidated genome to budding sites. Interacts with protein L; this interaction does not interfere with Z-L interaction. Interacts with host IKBKE (via Protein kinase domain); the interaction inhibits IKBKE kinase activity.

It is found in the virion. Its subcellular location is the host cytoplasm. Functionally, encapsidates the genome, protecting it from nucleases. The encapsidated genomic RNA is termed the nucleocapsid (NC). Serves as template for viral transcription and replication. The increased presence of protein N in host cell does not seem to trigger the switch from transcription to replication as observed in other negative strain RNA viruses. Through the interaction with host IKBKE, strongly inhibits the phosphorylation and nuclear translocation of host IRF3, a protein involved in interferon activation pathway, leading to the inhibition of interferon-beta and IRF3-dependent promoters activation. Also encodes a functional 3'-5' exoribonuclease that degrades preferentially dsRNA substrates and thereby participates in the suppression of interferon induction. This Lymphocytic choriomeningitis virus (strain WE) (LCMV) protein is Nucleoprotein.